We begin with the raw amino-acid sequence, 92 residues long: Sperm-specific protein Phi-1 (92 aa).

Residues 1–92 (MPSPTRRSSK…RVRAKKKKKK (92 aa)) form a disordered region. Basic residues-rich tracts occupy residues 7–19 (RSSK…RSRS) and 29–92 (AAKR…KKKK).

As to expression, sperm.

It localises to the nucleus. The protein resides in the chromosome. In terms of biological role, involved in nuclear basic protein transition: histones are replaced by spermatid specific proteins which are themselves replaced by protamines in late spermatids. The chain is Sperm-specific protein Phi-1 from Mytilus edulis (Blue mussel).